Here is a 122-residue protein sequence, read N- to C-terminus: Selenoprotein H (122 aa).

Lys-20 bears the N6-acetyllysine mark. Residues 41–44 (CTSU) constitute a cross-link (cysteinyl-selenocysteine (Cys-Sec); redox-active). Sec-44 is a non-standard amino acid (selenocysteine).

It belongs to the SelWTH family.

In terms of biological role, may be involved in a redox-related process. The sequence is that of Selenoprotein H from Macaca fascicularis (Crab-eating macaque).